We begin with the raw amino-acid sequence, 143 residues long: Ribonuclease P protein component 2 (143 aa).

This sequence belongs to the eukaryotic/archaeal RNase P protein component 2 family. As to quaternary structure, consists of a catalytic RNA component and at least 4-5 protein subunits.

The protein resides in the cytoplasm. It carries out the reaction Endonucleolytic cleavage of RNA, removing 5'-extranucleotides from tRNA precursor.. Part of ribonuclease P, a protein complex that generates mature tRNA molecules by cleaving their 5'-ends. The chain is Ribonuclease P protein component 2 from Saccharolobus solfataricus (strain ATCC 35092 / DSM 1617 / JCM 11322 / P2) (Sulfolobus solfataricus).